An 833-amino-acid chain; its full sequence is Leucine--tRNA ligase (833 aa).

Positions 41–52 (PYPSGAGLHVGH) match the 'HIGH' region motif. The 'KMSKS' region signature appears at 610–614 (KMSKS). An ATP-binding site is contributed by Lys613.

It belongs to the class-I aminoacyl-tRNA synthetase family.

The protein resides in the cytoplasm. It catalyses the reaction tRNA(Leu) + L-leucine + ATP = L-leucyl-tRNA(Leu) + AMP + diphosphate. This is Leucine--tRNA ligase from Streptococcus pneumoniae (strain Hungary19A-6).